Consider the following 553-residue polypeptide: Transcription factor GAMYB (553 aa).

Residues 1–17 (MYRVKSESDCEMIHQEQ) are compositionally biased toward basic and acidic residues. The segment at 1–45 (MYRVKSESDCEMIHQEQMDSPVADDGSSGGSPHRGGGPPLKKGPW) is disordered. Over residues 27–38 (SSGGSPHRGGGP) the composition is skewed to gly residues. 2 HTH myb-type domains span residues 37-89 (GPPL…ANHL) and 90-144 (RPNL…KRCQ). 2 DNA-binding regions (H-T-H motif) span residues 65-89 (WNAV…ANHL) and 117-140 (WARM…NTRI). Positions 464–488 (PAQSTSMGSGEQVMGPKYEPGDTSP) are disordered.

Its subcellular location is the nucleus. Functionally, transcriptional activator of gibberellin-dependent alpha-amylase expression in aleurone cells. Involved in pollen and floral organs development. May bind to the 5'-TAACAAA-3' box of alpha-amylase promoter. This chain is Transcription factor GAMYB (GAM1), found in Oryza sativa subsp. indica (Rice).